The following is a 317-amino-acid chain: Thymidylate synthase (317 aa).

DUMP-binding positions include Arg40 and 167–168 (RR). The active-site Nucleophile is the Cys187. Residues 216–219 (RSCD), Asn227, and 257–259 (HVY) each bind dUMP. A (6R)-5,10-methylene-5,6,7,8-tetrahydrofolate-binding site is contributed by Asp219.

The protein belongs to the thymidylate synthase family. As to quaternary structure, homodimer.

It catalyses the reaction dUMP + (6R)-5,10-methylene-5,6,7,8-tetrahydrofolate = 7,8-dihydrofolate + dTMP. Its pathway is pyrimidine metabolism; dTTP biosynthesis. The chain is Thymidylate synthase (TMP1) from Cryptococcus neoformans var. neoformans serotype D (strain B-3501A) (Filobasidiella neoformans).